We begin with the raw amino-acid sequence, 225 residues long: Uridylate kinase (225 aa).

G9–S10 is a binding site for ATP. Residue G46 coordinates UMP. ATP contacts are provided by G47 and R51. UMP is bound by residues D67 and T115–T121. 4 residues coordinate ATP: T141, N142, Y147, and D150.

It belongs to the UMP kinase family. In terms of assembly, homohexamer.

The protein resides in the cytoplasm. The catalysed reaction is UMP + ATP = UDP + ADP. It functions in the pathway pyrimidine metabolism; CTP biosynthesis via de novo pathway; UDP from UMP (UMPK route): step 1/1. Inhibited by UTP. In terms of biological role, catalyzes the reversible phosphorylation of UMP to UDP. The chain is Uridylate kinase from Methanococcus maripaludis (strain C5 / ATCC BAA-1333).